The chain runs to 482 residues: MNLLDPFMKMTEEQDKCMSGAPSPTMSEDSAGSPCPSGSGSDTENTRPQENTFPKGDPELKKETEDEKFPVCIREAVSQVLKGYDWTLVPMPVRVNGSSKSKPHVKRPMNAFMVWAQAARRKLADQYPHLHNAELSKTLGKLWRLLNEGEKRPFVEEAERLRIQHKKDHPDYKYQPRRRKSVKNGQSEQEDGAEQTHISPNAIFKALQADSPHSASSMSEVHSPGEHSGQSQGPPTPPTTPKTDVQPGKPDLKREGRPLQESGRQPPHIDFRDVDIGELSSEVISTIETFDVNEFDQYLPPNGHPGVGSTQAPYTGSYGINSTPSATPGAGPAWMSKQQQQQQQQPQPPQHSLSTINSEQSQSQQRTHIKTEQLSPSHYSDQQQQHSPQQLNYSSFNLQHYSSSYPTITRAQYDYTEHQGSNSYYSHASGQNSGLYSNFSYMNPSQRPMYTPIADTTGVPSIPQTHSPQHWEQPVYTQLTRP.

Disordered stretches follow at residues 1-66 (MNLL…ETED) and 160-274 (RLRI…FRDV). Residues 30–41 (SAGSPCPSGSGS) show a composition bias toward low complexity. A compositionally biased stretch (polar residues) spans 42–52 (DTENTRPQENT). Composition is skewed to basic and acidic residues over residues 56-66 (GDPELKKETED) and 160-174 (RLRI…DYKY). Residue K61 forms a Glycyl lysine isopeptide (Lys-Gly) (interchain with G-Cter in SUMO) linkage. Residues 63-103 (ETEDEKFPVCIREAVSQVLKGYDWTLVPMPVRVNGSSKSKP) are dimerization (DIM). The segment at 63 to 103 (ETEDEKFPVCIREAVSQVLKGYDWTLVPMPVRVNGSSKSKP) is PQA. Positions 105–173 (VKRPMNAFMV…QHKKDHPDYK (69 aa)) form a DNA-binding region, HMG box. A compositionally biased stretch (polar residues) spans 211–220 (SPHSASSMSE). Residues 224-308 (PGEHSGQSQG…LPPNGHPGVG (85 aa)) are transactivation domain (TAM). Short sequence motifs (9aaTAD) lie at residues 276 to 285 (IGELSSEVIS) and 291 to 299 (DVNEFDQYL). The disordered stretch occupies residues 295 to 395 (FDQYLPPNGH…HSPQQLNYSS (101 aa)). Composition is skewed to polar residues over residues 308–326 (GSTQ…TPSA) and 351–366 (HSLS…SQQR). The tract at residues 366-482 (RTHIKTEQLS…QPVYTQLTRP (117 aa)) is transactivation domain (TAC). Residue K370 forms a Glycyl lysine isopeptide (Lys-Gly) (interchain with G-Cter in SUMO) linkage. Over residues 375–390 (SPSHYSDQQQQHSPQQ) the composition is skewed to low complexity. Positions 433-441 (SGLYSNFSY) match the 9aaTAD 3 motif. Positions 448–482 (PMYTPIADTTGVPSIPQTHSPQHWEQPVYTQLTRP) are disordered. Positions 458–482 (GVPSIPQTHSPQHWEQPVYTQLTRP) are enriched in polar residues.

Interacts with the sumoylation factors ube2i/ubc9 and sumo1. Sumoylated. Lys-370 is the major site of sumoylation, although sumoylation at Lys-61 also occurs. Sumoylation plays a key role in regulating formation of the neural crest and otic placode. As to expression, expressed in both male and female gonads from after metamorphosis through to adult stages. In the testis, expression is restricted to the supporting Sertoli-like cells. Conversely in the ovary, expression is localized to primary oocytes (at protein level). In developing limbs, expressed before chrondrocytes form (stage 52 tadpoles) and throughout the cartilaginous anlagen until stage 56, after which expression ceases in the enlarged cells of the diaphysis. At later stages, expression continues in the chondrocytes of the epiphysis and metaphysis, and weak expression is seen in most of the diaphysis.

It is found in the nucleus. The protein localises to the cytoplasm. Its function is as follows. Transcription factor that plays a key role in chondrocytes differentiation and skeletal development. Specifically binds the 5'-ACAAAG-3' DNA motif present in enhancers and super-enhancers and promotes expression of genes important for chondrogenesis, including COL2A1. Plays a central role in successive steps of chondrocyte differentiation. Absolutely required for precartilaginous condensation, the first step in chondrogenesis during which skeletal progenitors differentiate into prechondrocytes. Together with SOX5 and SOX6, required for overt chondrogenesis when condensed prechondrocytes differentiate into early stage chondrocytes, the second step in chondrogenesis. Later, required to direct hypertrophic maturation and block osteoblast differentiation of growth plate chondrocytes: maintains chondrocyte columnar proliferation, delays prehypertrophy and then prevents osteoblastic differentiation of chondrocytes. Also required for chondrocyte hypertrophy, both indirectly, by keeping the lineage fate of chondrocytes, and directly, by remaining present in upper hypertrophic cells. Low lipid levels are the main nutritional determinant for chondrogenic commitment of skeletal progenitor cells: when lipids levels are low, FOXO transcription factors promote expression of SOX9, which induces chondrogenic commitment and suppresses fatty acid oxidation. In addition to cartilage development, also acts as a regulator of proliferation and differentiation in epithelial stem/progenitor cells. Unlikely to play a role in sex determination but may function during testicular and ovarian differentiation. In Xenopus tropicalis (Western clawed frog), this protein is Transcription factor Sox-9.